A 242-amino-acid polypeptide reads, in one-letter code: 3-dehydroquinate dehydratase (242 aa).

3-dehydroquinate-binding positions include 39 to 41 (EIR) and Arg-73. Catalysis depends on His-135, which acts as the Proton donor/acceptor. Residue Lys-162 is the Schiff-base intermediate with substrate of the active site. 3-dehydroquinate contacts are provided by Arg-203 and Gln-228.

It belongs to the type-I 3-dehydroquinase family. Homodimer.

It catalyses the reaction 3-dehydroquinate = 3-dehydroshikimate + H2O. It functions in the pathway metabolic intermediate biosynthesis; chorismate biosynthesis; chorismate from D-erythrose 4-phosphate and phosphoenolpyruvate: step 3/7. Its function is as follows. Involved in the third step of the chorismate pathway, which leads to the biosynthesis of aromatic amino acids. Catalyzes the cis-dehydration of 3-dehydroquinate (DHQ) and introduces the first double bond of the aromatic ring to yield 3-dehydroshikimate. The polypeptide is 3-dehydroquinate dehydratase (Methanosarcina mazei (strain ATCC BAA-159 / DSM 3647 / Goe1 / Go1 / JCM 11833 / OCM 88) (Methanosarcina frisia)).